Here is a 177-residue protein sequence, read N- to C-terminus: SPbeta prophage-derived uncharacterized N-acetyltransferase YokL (177 aa).

In terms of domain architecture, N-acetyltransferase spans 11 to 170 (LTLRAIQPED…DGICFGMTRE (160 aa)).

The protein belongs to the acetyltransferase family.

The polypeptide is SPbeta prophage-derived uncharacterized N-acetyltransferase YokL (yokL) (Bacillus subtilis (strain 168)).